The primary structure comprises 71 residues: Protein translocase subunit SecE (71 aa).

The helical transmembrane segment at 43 to 63 (VAGVGILAVGAIGFIIYVLLT) threads the bilayer.

Belongs to the SecE/SEC61-gamma family. In terms of assembly, component of the Sec protein translocase complex. Heterotrimer consisting of SecY (alpha), SecG (beta) and SecE (gamma) subunits. The heterotrimers can form oligomers, although 1 heterotrimer is thought to be able to translocate proteins. Interacts with the ribosome. May interact with SecDF, and other proteins may be involved.

The protein localises to the cell membrane. Its function is as follows. Essential subunit of the Sec protein translocation channel SecYEG. Clamps together the 2 halves of SecY. May contact the channel plug during translocation. This is Protein translocase subunit SecE from Methanosarcina barkeri (strain Fusaro / DSM 804).